A 466-amino-acid polypeptide reads, in one-letter code: 3-isopropylmalate dehydratase large subunit (466 aa).

[4Fe-4S] cluster-binding residues include Cys-347, Cys-407, and Cys-410.

This sequence belongs to the aconitase/IPM isomerase family. LeuC type 1 subfamily. As to quaternary structure, heterodimer of LeuC and LeuD. The cofactor is [4Fe-4S] cluster.

The enzyme catalyses (2R,3S)-3-isopropylmalate = (2S)-2-isopropylmalate. It participates in amino-acid biosynthesis; L-leucine biosynthesis; L-leucine from 3-methyl-2-oxobutanoate: step 2/4. In terms of biological role, catalyzes the isomerization between 2-isopropylmalate and 3-isopropylmalate, via the formation of 2-isopropylmaleate. The protein is 3-isopropylmalate dehydratase large subunit of Escherichia coli (strain 55989 / EAEC).